We begin with the raw amino-acid sequence, 169 residues long: Peptide deformylase (169 aa).

The Fe cation site is built by cysteine 91 and histidine 133. Glutamate 134 is an active-site residue. Position 137 (histidine 137) interacts with Fe cation.

Belongs to the polypeptide deformylase family. It depends on Fe(2+) as a cofactor.

It catalyses the reaction N-terminal N-formyl-L-methionyl-[peptide] + H2O = N-terminal L-methionyl-[peptide] + formate. In terms of biological role, removes the formyl group from the N-terminal Met of newly synthesized proteins. Requires at least a dipeptide for an efficient rate of reaction. N-terminal L-methionine is a prerequisite for activity but the enzyme has broad specificity at other positions. The protein is Peptide deformylase of Serratia proteamaculans (strain 568).